The sequence spans 319 residues: D-alanine--D-alanine ligase (319 aa).

One can recognise an ATP-grasp domain in the interval 120–315; the sequence is KRVLAQAGVP…YPELLRRLVE (196 aa). 147–198 contributes to the ATP binding site; it reads DPPFFVKPANTGSSVGISRVERFQDLEAALALAFRYDEKAVVEKALSPVREL. 3 residues coordinate Mg(2+): Asp-270, Glu-282, and Asn-284.

This sequence belongs to the D-alanine--D-alanine ligase family. It depends on Mg(2+) as a cofactor. Mn(2+) serves as cofactor.

It is found in the cytoplasm. The enzyme catalyses 2 D-alanine + ATP = D-alanyl-D-alanine + ADP + phosphate + H(+). It functions in the pathway cell wall biogenesis; peptidoglycan biosynthesis. Its function is as follows. Cell wall formation. The sequence is that of D-alanine--D-alanine ligase from Thermus thermophilus (strain ATCC BAA-163 / DSM 7039 / HB27).